The chain runs to 500 residues: Probable cytosol aminopeptidase (500 aa).

2 residues coordinate Mn(2+): K264 and D269. K276 is an active-site residue. Mn(2+) is bound by residues D287, D346, and E348. Residue R350 is part of the active site.

The protein belongs to the peptidase M17 family. It depends on Mn(2+) as a cofactor.

Its subcellular location is the cytoplasm. It catalyses the reaction Release of an N-terminal amino acid, Xaa-|-Yaa-, in which Xaa is preferably Leu, but may be other amino acids including Pro although not Arg or Lys, and Yaa may be Pro. Amino acid amides and methyl esters are also readily hydrolyzed, but rates on arylamides are exceedingly low.. It carries out the reaction Release of an N-terminal amino acid, preferentially leucine, but not glutamic or aspartic acids.. In terms of biological role, presumably involved in the processing and regular turnover of intracellular proteins. Catalyzes the removal of unsubstituted N-terminal amino acids from various peptides. The sequence is that of Probable cytosol aminopeptidase from Nitrobacter hamburgensis (strain DSM 10229 / NCIMB 13809 / X14).